The following is a 123-amino-acid chain: ATP synthase epsilon chain (123 aa).

This sequence belongs to the ATPase epsilon chain family. As to quaternary structure, F-type ATPases have 2 components, CF(1) - the catalytic core - and CF(0) - the membrane proton channel. CF(1) has five subunits: alpha(3), beta(3), gamma(1), delta(1), epsilon(1). CF(0) has three main subunits: a, b and c.

It is found in the cell inner membrane. Produces ATP from ADP in the presence of a proton gradient across the membrane. The sequence is that of ATP synthase epsilon chain from Helicobacter pylori (strain P12).